The primary structure comprises 178 residues: Relaxin-like protein SQ10 (178 aa).

The first 20 residues, 1-20 (MPALLFYLLGFCLLQGQVTG), serve as a signal peptide directing secretion. 3 disulfides stabilise this stretch: cysteine 34-cysteine 165, cysteine 46-cysteine 178, and cysteine 164-cysteine 169. The propeptide at 54–150 (ESPSPENPFL…SSASESNTFS (97 aa)) is connecting peptide.

It belongs to the insulin family. In terms of assembly, heterodimer of a B chain and an A chain linked by two disulfide bonds.

The protein resides in the secreted. This is Relaxin-like protein SQ10 from Oryctolagus cuniculus (Rabbit).